Here is a 160-residue protein sequence, read N- to C-terminus: uncharacterized protein (160 aa).

In terms of domain architecture, N-acetyltransferase spans 7 to 151 (LLINFKTLEE…NPYIWHPDMD (145 aa)).

This is an uncharacterized protein from Bacillus velezensis (strain DSM 23117 / BGSC 10A6 / LMG 26770 / FZB42) (Bacillus amyloliquefaciens subsp. plantarum).